Consider the following 213-residue polypeptide: Thymidine kinase (213 aa).

ATP is bound by residues 20–27 and 93–96; these read GPMFSGKT and DEAQ. Catalysis depends on glutamate 94, which acts as the Proton acceptor. Zn(2+)-binding residues include cysteine 150, cysteine 153, cysteine 185, and histidine 188.

Belongs to the thymidine kinase family. Homotetramer.

Its subcellular location is the cytoplasm. It carries out the reaction thymidine + ATP = dTMP + ADP + H(+). In Mycoplasma genitalium (strain ATCC 33530 / DSM 19775 / NCTC 10195 / G37) (Mycoplasmoides genitalium), this protein is Thymidine kinase.